A 322-amino-acid chain; its full sequence is MSGEVPPNINIKEPRWDQSTFIGRASHFFTVTDPRNILLTNEQLENARKVVHDYRQGIVPAGLTENELWRAKYAYDSAFHPDTGEKMTLIGRMSAQVPMNMTITGCMMTFYRTTPAVLFWQWINQSFNAVVNYTNRSGDAPLTVNELGTAYVSATTGAVATALGLNALTKRVSPLIGRFVPFAAVAAANCINIPLMRQRELKVGIPVTDENGTRLGESTNAAKQAITQVVISRILMAAPGMAIPPFIMNTLEKKAFLKRFPWMSAPIQVTLVGFCLVFATPLCCALFPQKSSMSVTSLEDELQASIQRTHPEIRRVYFNKGL.

At serine 2 the chain carries N-acetylserine. The Mitochondrial matrix segment spans residues 2–102; sequence SGEVPPNINI…MSAQVPMNMT (101 aa). The chain crosses the membrane as a helical span at residues 103–120; sequence ITGCMMTFYRTTPAVLFW. Residues 121 to 146 are Mitochondrial intermembrane-facing; that stretch reads QWINQSFNAVVNYTNRSGDAPLTVNE. A helical membrane pass occupies residues 147 to 167; sequence LGTAYVSATTGAVATALGLNA. Residues 168–174 lie on the Mitochondrial matrix side of the membrane; it reads LTKRVSP. A helical membrane pass occupies residues 175–195; it reads LIGRFVPFAAVAAANCINIPL. Residues 196–228 lie on the Mitochondrial intermembrane side of the membrane; it reads MRQRELKVGIPVTDENGTRLGESTNAAKQAITQ. A helical membrane pass occupies residues 229–249; sequence VVISRILMAAPGMAIPPFIMN. The Mitochondrial matrix portion of the chain corresponds to 250-266; the sequence is TLEKKAFLKRFPWMSAP. Residues 267 to 287 traverse the membrane as a helical segment; it reads IQVTLVGFCLVFATPLCCALF. Over 288-322 the chain is Mitochondrial intermembrane; sequence PQKSSMSVTSLEDELQASIQRTHPEIRRVYFNKGL.

It belongs to the sideroflexin family. Widely expressed, with highest expression in kidney and liver.

The protein localises to the mitochondrion inner membrane. The enzyme catalyses L-serine(in) = L-serine(out). It catalyses the reaction L-alanine(in) = L-alanine(out). It carries out the reaction L-cysteine(in) = L-cysteine(out). Amino acid transporter importing serine, an essential substrate of the mitochondrial branch of the one-carbon pathway, into mitochondria. Mitochondrial serine is then converted to glycine and formate, which exits to the cytosol where it is used to generate the charged folates that serve as one-carbon donors. May also transport other amino acids including alanine and cysteine. The protein is Sideroflexin-1 of Mus musculus (Mouse).